The sequence spans 154 residues: Transcriptional regulator MraZ (154 aa).

2 consecutive SpoVT-AbrB domains span residues 6–53 (NSEA…PENV) and 83–126 (VEVI…SKEI).

This sequence belongs to the MraZ family. As to quaternary structure, forms oligomers.

It is found in the cytoplasm. It localises to the nucleoid. This Phocaeicola vulgatus (strain ATCC 8482 / DSM 1447 / JCM 5826 / CCUG 4940 / NBRC 14291 / NCTC 11154) (Bacteroides vulgatus) protein is Transcriptional regulator MraZ.